The primary structure comprises 391 residues: Aspartate carbamoyltransferase 3, chloroplastic (391 aa).

The N-terminal 69 residues, 1–69 (MTASSSLFSC…SKCDKMIKTR (69 aa)), are a transit peptide targeting the chloroplast. Carbamoyl phosphate contacts are provided by arginine 137 and threonine 138. UMP contacts are provided by arginine 137 and threonine 138. Lysine 167 contacts L-aspartate. Carbamoyl phosphate contacts are provided by arginine 188, histidine 216, and glutamine 219. The UMP site is built by arginine 188 and histidine 216. The UMP site is built by arginine 249 and arginine 311. L-aspartate is bound by residues arginine 249 and arginine 311. Residues leucine 351 and proline 352 each coordinate carbamoyl phosphate.

This sequence belongs to the aspartate/ornithine carbamoyltransferase superfamily. ATCase family. As to quaternary structure, homotrimer.

The protein resides in the plastid. It is found in the chloroplast. It carries out the reaction carbamoyl phosphate + L-aspartate = N-carbamoyl-L-aspartate + phosphate + H(+). The protein operates within pyrimidine metabolism; UMP biosynthesis via de novo pathway; (S)-dihydroorotate from bicarbonate: step 2/3. Feedback inhibited by UMP. Catalyzes the condensation of carbamoyl phosphate and aspartate to form carbamoyl aspartate and inorganic phosphate, the committed step in the de novo pyrimidine nucleotide biosynthesis pathway. The polypeptide is Aspartate carbamoyltransferase 3, chloroplastic (PYRB3) (Pisum sativum (Garden pea)).